The chain runs to 287 residues: Acetylglutamate kinase (287 aa).

Substrate contacts are provided by residues 70-71 (GG), Arg-92, and Asn-184.

Belongs to the acetylglutamate kinase family. ArgB subfamily.

It is found in the cytoplasm. The catalysed reaction is N-acetyl-L-glutamate + ATP = N-acetyl-L-glutamyl 5-phosphate + ADP. Its pathway is amino-acid biosynthesis; L-arginine biosynthesis; N(2)-acetyl-L-ornithine from L-glutamate: step 2/4. In terms of biological role, catalyzes the ATP-dependent phosphorylation of N-acetyl-L-glutamate. This Roseobacter denitrificans (strain ATCC 33942 / OCh 114) (Erythrobacter sp. (strain OCh 114)) protein is Acetylglutamate kinase.